The following is a 361-amino-acid chain: Peptide chain release factor 1 (361 aa).

The residue at position 236 (Gln-236) is an N5-methylglutamine. Residues 285 to 309 (TAKDSARAADRKAQVGSGDRSERIR) show a composition bias toward basic and acidic residues. Residues 285-311 (TAKDSARAADRKAQVGSGDRSERIRTY) are disordered.

The protein belongs to the prokaryotic/mitochondrial release factor family. Methylated by PrmC. Methylation increases the termination efficiency of RF1.

The protein resides in the cytoplasm. In terms of biological role, peptide chain release factor 1 directs the termination of translation in response to the peptide chain termination codons UAG and UAA. This Methylorubrum extorquens (strain CM4 / NCIMB 13688) (Methylobacterium extorquens) protein is Peptide chain release factor 1.